The following is a 539-amino-acid chain: 3-hydroxy-3-methylglutaryl-coenzyme A reductase 1 (539 aa).

Residues 63–83 (FATVVCQLASVVYLLSLFAHP) traverse the membrane as a helical segment. Residues 84–124 (DAPATTTGDDDDGQGGSRRARPAAAEPAPMHGHGGGMMEAD) are linker. The disordered stretch occupies residues 87–116 (ATTTGDDDDGQGGSRRARPAAAEPAPMHGH). Low complexity predominate over residues 105 to 114 (PAAAEPAPMH). Residues 125-539 (DEEIVAAVAS…SSKDVAKAAS (415 aa)) form a catalytic region. Residue E218 is the Charge relay system of the active site. A glycan (N-linked (GlcNAc...) asparagine) is linked at N282. Catalysis depends on charge relay system residues K350 and D426. Residues 496 to 516 (LATIVAGSVLAGELSLLAALA) traverse the membrane as a helical segment. The active-site Proton donor is the H524. N528 carries an N-linked (GlcNAc...) asparagine glycan.

The protein belongs to the HMG-CoA reductase family.

The protein resides in the endoplasmic reticulum membrane. The enzyme catalyses (R)-mevalonate + 2 NADP(+) + CoA = (3S)-3-hydroxy-3-methylglutaryl-CoA + 2 NADPH + 2 H(+). It functions in the pathway metabolic intermediate biosynthesis; (R)-mevalonate biosynthesis; (R)-mevalonate from acetyl-CoA: step 3/3. Catalyzes the synthesis of mevalonate. The specific precursor of all isoprenoid compounds present in plants. In Oryza sativa subsp. indica (Rice), this protein is 3-hydroxy-3-methylglutaryl-coenzyme A reductase 1 (HMG1).